A 229-amino-acid chain; its full sequence is Protein rep (229 aa).

Tyr-214 provides a ligand contact to DNA.

The protein belongs to the Gram-positive plasmids replication protein type 1 family.

Produces a single-strand nick in a specific site of the plasmid, and this nick results in single-strand replication by rolling circle mechanism. This chain is Protein rep, found in Staphylococcus aureus.